The sequence spans 298 residues: Protease HtpX homolog (298 aa).

The next 2 membrane-spanning stretches (helical) occupy residues 14–34 and 39–59; these read VVLL…AGYL and YAMG…SMIF. Histidine 143 is a binding site for Zn(2+). The active site involves glutamate 144. Zn(2+) is bound at residue histidine 147. Transmembrane regions (helical) follow at residues 158 to 178 and 197 to 217; these read IAVA…RMLW and IITL…ASLI. Zn(2+) is bound at residue glutamate 226.

It belongs to the peptidase M48B family. Zn(2+) serves as cofactor.

The protein localises to the cell membrane. In Streptococcus pyogenes serotype M28 (strain MGAS6180), this protein is Protease HtpX homolog.